The chain runs to 126 residues: MSVMDLANTCSSFQSDLDFCSDCGSVLPLPGAQDTVTCIRCGFNINVRDFEGKVVKTSVVFHQLGTAMPMSVEEGPECQGPVVDRRCPRCGHEGMAYHTRQMRSADEGQTVFYTCTNCKFQEKEDS.

Residues cysteine 20, cysteine 23, cysteine 38, cysteine 41, cysteine 87, and cysteine 90 each contribute to the Zn(2+) site. The segment at 20–41 (CSDCGSVLPLPGAQDTVTCIRC) adopts a C4-type zinc-finger fold. Residues 83-123 (VDRRCPRCGHEGMAYHTRQMRSADEGQTVFYTCTNCKFQEK) form a TFIIS-type zinc finger. The Hairpin signature appears at 106 to 107 (DE). Cysteine 115 and cysteine 118 together coordinate Zn(2+).

Belongs to the archaeal RpoM/eukaryotic RPA12/RPB9/RPC11 RNA polymerase family. As to quaternary structure, component of the RNA polymerase I (Pol I) complex consisting of 13 subunits: a ten-subunit catalytic core composed of POLR1A/RPA1, POLR1B/RPA2, POLR1C/RPAC1, POLR1D/RPAC2, POLR1H/RPA12, POLR2E/RPABC1, POLR2F/RPABC2, POLR2H/RPABC3, POLR2K/RPABC4 and POLR2L/RPABC5; a mobile stalk subunit POLR1F/RPA43 protruding from the core and additional subunits homologous to general transcription factors POLR1E/RPA49 and POLR1G/RPA34. Part of Pol I pre-initiation complex (PIC), in which Pol I core assembles with RRN3 and promoter-bound UTBF and SL1/TIF-IB complex.

It localises to the nucleus. It is found in the nucleolus. In terms of biological role, core component of RNA polymerase I (Pol I), a DNA-dependent RNA polymerase which synthesizes ribosomal RNA precursors using the four ribonucleoside triphosphates as substrates. Can mediate Pol I proofreading of the nascent RNA transcript. Anchors into the Pol I active site to monitor transcription fidelity and cleave mis-incorporated 5'-ribonucleotides. The chain is DNA-directed RNA polymerase I subunit RPA12 from Homo sapiens (Human).